Consider the following 415-residue polypeptide: von Willebrand factor A domain-containing protein 1 (415 aa).

A signal peptide spans 1–18 (MLFWTAFSMALSLRLALA). In terms of domain architecture, VWFA spans 34-209 (DLLFLLDSSA…IIARELRGSI (176 aa)). 3 positions are modified to phosphoserine: S74, S80, and S93. Fibronectin type-III domains are found at residues 214-305 (QPQQ…LQEE) and 307-403 (GPER…TRAP). Residue N264 is glycosylated (N-linked (GlcNAc...) asparagine). C369 and C393 are oxidised to a cystine. The disordered stretch occupies residues 391–415 (KACTASGARTRAPQSMRPEAGPREP).

As to quaternary structure, homodimer or homomultimer; disulfide-linked. Interacts with HSPG2. In terms of processing, N-glycosylated. As to expression, expressed at high levels in the chondrocytes. Detected in the vasculature of neural tissues, in basement membrane structures of the peripheral nervous system, in the apical ectodermal ridge of developing limb buds, and in skeletal and cardiac muscle (at protein level).

It localises to the secreted. It is found in the extracellular space. The protein resides in the extracellular matrix. Its subcellular location is the basement membrane. In terms of biological role, promotes matrix assembly. Involved in the organization of skeletal muscles and in the formation of neuromuscular junctions. In Mus musculus (Mouse), this protein is von Willebrand factor A domain-containing protein 1 (Vwa1).